The chain runs to 611 residues: MWTHPINYDVIVVGAGHAGCEAAFCSAKMGASVLILSSNLDTIAKLSCNPAVGGIGKGHIVREIDALGGIMAEVTDQSGIQFRILNQTKGPAVRAPRAQVDKQMYHIHMKRLLESSPGLHIMQGTVESLLDNENVIQGVTTKEGITYLGKTVILSSGTFMRGLIHIGDLNFPGGRLGDPAATGLSLALKERGFPISRLKTGTPPRLLASSIDFSVTEEQPGDPGVGFVHRSEPFVPPLPQVSCYITHTTEKTKDIIAANIHRSALYGGRIEGIGPRYCPSIEDKIVKFADKERHHIFIEPEGIHTQEVYVNGLSTSMPFDVQYDMIRSVLGLENAIITRPAYAIEYDYVHGNVIYPTLESKLIEGLFLCGQINGTTGYEEAAAQGLIAGINAVNKVLKKPAFIPSRQESYIGVMLDDLTTQILDEPYRMFTGRAEHRLLLRQDNACLRLSHYGRDLGLLSKERYEIFENQKQIIEEEKLRLSKTFKKYGNSVVSLAKALCRPEVSYDTLREAFPEDIRDYGSTLNASLEMEIKYAGYIDRQKALIHSLSKSENMVIPEDIDYQSISSLSLEAREKLAKFTPRTIGSASRISGIACADIQVLMVAVKKHAHQ.

An FAD-binding site is contributed by 14 to 19; the sequence is GAGHAG. Position 274-288 (274-288) interacts with NAD(+); it reads GPRYCPSIEDKIVKF.

It belongs to the MnmG family. Homodimer. Heterotetramer of two MnmE and two MnmG subunits. It depends on FAD as a cofactor.

It localises to the cytoplasm. Functionally, NAD-binding protein involved in the addition of a carboxymethylaminomethyl (cmnm) group at the wobble position (U34) of certain tRNAs, forming tRNA-cmnm(5)s(2)U34. The chain is tRNA uridine 5-carboxymethylaminomethyl modification enzyme MnmG from Chlamydia abortus (strain DSM 27085 / S26/3) (Chlamydophila abortus).